Reading from the N-terminus, the 403-residue chain is Accessory Sec system protein translocase subunit SecY2 (403 aa).

Helical transmembrane passes span 17–37, 63–83, 105–125, 131–151, 157–177, 186–206, 240–260, 276–296, 339–359, and 366–386; these read MLYT…SIVS, LNIF…LMLI, ILTL…YVSK, DNIY…VWLA, YGIA…MMHQ, HIVI…LLFI, ITLM…HFIL, FDSP…GYFL, WFGL…TLFV, and IYFS…AETI.

This sequence belongs to the SecY/SEC61-alpha family. SecY2 subfamily. May form heterotrimers with SecE and SecG subunits (Potential). Component of the accessory SecA2/SecY2 protein translocase complex required to export cell wall protein SrpA.

It is found in the cell membrane. In terms of biological role, the central subunit of a protein translocation channel (Potential). Part of the accessory SecA2/SecY2 system specifically required to export SraP, a serine-rich repeat cell wall protein encoded upstream in the same operon. The polypeptide is Accessory Sec system protein translocase subunit SecY2 (Staphylococcus aureus (strain NCTC 8325 / PS 47)).